Consider the following 148-residue polypeptide: Large ribosomal subunit protein uL22 (148 aa).

This sequence belongs to the universal ribosomal protein uL22 family. As to quaternary structure, part of the 50S ribosomal subunit.

In terms of biological role, this protein binds specifically to 23S rRNA. It makes multiple contacts with different domains of the 23S rRNA in the assembled 50S subunit and ribosome. Its function is as follows. The globular domain of the protein is located near the polypeptide exit tunnel on the outside of the subunit, while an extended beta-hairpin is found that lines the wall of the exit tunnel in the center of the 70S ribosome. This is Large ribosomal subunit protein uL22 from Thermoplasma volcanium (strain ATCC 51530 / DSM 4299 / JCM 9571 / NBRC 15438 / GSS1).